The sequence spans 550 residues: Transcription factor 7-like 1-D (550 aa).

The tract at residues 1-61 (MPQLNSGXGD…SENHSSDSDS (61 aa)) is interaction with CTNNB1-A. Disordered stretches follow at residues 1-77 (MPQL…EKPR), 182-212 (GTPP…PYYP), 390-473 (WSAR…SLTT), and 488-514 (ASKS…SRPI). Composition is skewed to basic and acidic residues over residues 17 to 32 (ELIR…EKSP) and 52 to 77 (SENH…EKPR). Residues 109-311 (LGGITCPMVP…SPNLSMKSNV (203 aa)) form an interaction with AES and TLE4-A region. Positions 323-391 (IKKPLNAFML…LHSQLYPSWS (69 aa)) form a DNA-binding region, HMG box. A compositionally biased stretch (basic and acidic residues) spans 406–415 (KQSPEMENYT). The interaction with CTBP-B stretch occupies residues 407–550 (QSPEMENYTK…PLPLVARSSD (144 aa)). Residues 444 to 455 (SPATPSAALASP) show a composition bias toward low complexity.

It belongs to the TCF/LEF family. As to quaternary structure, interacts with csnk1e, ctnnb1-A, ctbp-B, dact1-A and gsk3b. May interact with ase and tle4-A. Post-translationally, phosphorylated. Phosphorylation by csnk1e promotes binding to ctnnb1-A while phosphorylation by gsk3b may reverse this effect.

It is found in the nucleus. In terms of biological role, participates in the Wnt signaling pathway. Binds to DNA and acts as a repressor in the absence of ctnnb1-A and possibly ctnnb1-B, and as an activator in the presence of these proteins. Required early in development for the establishment of the dorsal body axis in response to maternal Wnt signaling. This chain is Transcription factor 7-like 1-D (tcf7l1-d), found in Xenopus laevis (African clawed frog).